Here is a 166-residue protein sequence, read N- to C-terminus: Cyclin-dependent kinase 4 inhibitor D (166 aa).

At Met1 the chain carries N-acetylmethionine. ANK repeat units lie at residues 41 to 69 (FGKT…SPNV), 73 to 102 (SGTT…DVNA), 106 to 135 (TGAL…LHHR), and 138 to 166 (TGLT…VAPL).

Belongs to the CDKN2 cyclin-dependent kinase inhibitor family. In terms of assembly, interacts with CDK6.

The protein localises to the nucleus. It localises to the cytoplasm. Functionally, interacts strongly with CDK4 and CDK6 and inhibits them. This chain is Cyclin-dependent kinase 4 inhibitor D (CDKN2D), found in Bos taurus (Bovine).